The sequence spans 123 residues: Small ribosomal subunit protein uS12c (123 aa).

A compositionally biased stretch (polar residues) spans 1 to 20; sequence MPTIQQLIRNTRQPTQNRTK. Residues 1 to 27 form a disordered region; that stretch reads MPTIQQLIRNTRQPTQNRTKSPALKAC.

Belongs to the universal ribosomal protein uS12 family. As to quaternary structure, part of the 30S ribosomal subunit.

It localises to the plastid. The protein resides in the chloroplast. With S4 and S5 plays an important role in translational accuracy. Located at the interface of the 30S and 50S subunits. This Zygnema circumcarinatum (Green alga) protein is Small ribosomal subunit protein uS12c (rps12).